The chain runs to 1845 residues: Histone-lysine N-methyltransferase, H3 lysine-79 specific (1845 aa).

Polar residues predominate over residues 1–44 (MSTNSTPRKQKLSNSKSLQNSPISPTVKKTNSFPLGNNIPTNIN). Disordered stretches follow at residues 1 to 67 (MSTN…NGIG), 83 to 306 (PPLP…NKWT), 450 to 470 (SHDI…NKNK), 486 to 571 (QKLK…TERK), 585 to 681 (RKER…NDSY), 741 to 767 (GETF…KKIE), 862 to 881 (QTTK…AETE), and 963 to 1102 (KDNP…SNSL). Composition is skewed to low complexity over residues 52–67 (NNSN…NGIG), 90–162 (SSSS…QQEP), 191–226 (PSTP…SNNS), and 239–263 (NNNN…NNNN). The span at 268–280 (VIDDDDDDDDDEG) shows a compositional bias: acidic residues. Residues 282–294 (SIKSTHTSTQSTP) are compositionally biased toward polar residues. A compositionally biased stretch (basic and acidic residues) spans 295–304 (IRDRRQRDNK). Residues 453–464 (INNNNNNNNNNK) are compositionally biased toward low complexity. A compositionally biased stretch (basic and acidic residues) spans 585–679 (RKERERKERK…IEKERREKND (95 aa)). The required for interaction with nucleosomes and DNA stretch occupies residues 625-639 (KKKEKEKEKEKEKEK). 4 stretches are compositionally biased toward low complexity: residues 750–763 (NNNN…NNNN), 862–877 (QTTK…TTTT), 972–1011 (NNNR…RNNN), and 1020–1067 (NNNN…NNTI). The segment covering 1069–1080 (KKIETIKKDINK) has biased composition (basic and acidic residues). The segment covering 1084–1102 (KTTTTTSSSSSSTSSSNSL) has biased composition (low complexity). The 322-residue stretch at 1125 to 1446 (FDVGIGVPVT…KDSDIVTDQT (322 aa)) folds into the DOT1 domain. S-adenosyl-L-methionine-binding positions include 1251-1254 (YGEA), 1274-1283 (FCDIGCGIGN), and Glu1300. Disordered regions lie at residues 1463–1559 (LQLF…NKPI), 1610–1661 (RISP…SSND), 1735–1762 (HQKS…KKEQ), 1772–1791 (NYNN…NHNN), and 1799–1845 (TDLI…DNNK). Low complexity-rich tracts occupy residues 1467–1522 (SSSS…TPNS), 1541–1556 (NNNN…NSNN), and 1610–1642 (RISP…SSSD). The segment covering 1643 to 1656 (NENDDDNGDDEDDS) has biased composition (acidic residues). Over residues 1745–1759 (RLSRKQKKLAKKNKK) the composition is skewed to basic residues. Composition is skewed to low complexity over residues 1799–1817 (TDLI…INND) and 1835–1845 (KDYNNINDNNK).

This sequence belongs to the class I-like SAM-binding methyltransferase superfamily. DOT1 family.

It is found in the nucleus. The enzyme catalyses L-lysyl(79)-[histone H3] + 3 S-adenosyl-L-methionine = N(6),N(6),N(6)-trimethyl-L-lysyl(79)-[histone H3] + 3 S-adenosyl-L-homocysteine + 3 H(+). Its function is as follows. Histone methyltransferase that specifically methylates histone H3 to form H3K79me. This methylation is required for telomere silencing, correct growth and development, and for resistance to DNA damage induced by UV LIGHT. This chain is Histone-lysine N-methyltransferase, H3 lysine-79 specific, found in Dictyostelium discoideum (Social amoeba).